Reading from the N-terminus, the 78-residue chain is Apolipoprotein C-I (78 aa).

The N-terminal stretch at 1–26 (MRLILWLPVLVVVLLMVTEGPAPAQG) is a signal peptide.

It belongs to the apolipoprotein C1 family.

The protein resides in the secreted. Functionally, inhibitor of lipoprotein binding to the low density lipoprotein (LDL) receptor, LDL receptor-related protein, and very low density lipoprotein (VLDL) receptor. Associates with high density lipoproteins (HDL) and the triacylglycerol-rich lipoproteins in the plasma and makes up about 10% of the protein of the VLDL and 2% of that of HDL. Appears to interfere directly with fatty acid uptake and is also the major plasma inhibitor of cholesteryl ester transfer protein (CETP). Binds free fatty acids and reduces their intracellular esterification. Modulates the interaction of APOE with beta-migrating VLDL and inhibits binding of beta-VLDL to the LDL receptor-related protein. This Panthera tigris altaica (Siberian tiger) protein is Apolipoprotein C-I (APOC1).